The chain runs to 290 residues: Bifunctional protein FolD (290 aa).

NADP(+) is bound by residues 165–167, Ser190, and Ile231; that span reads GRS.

It belongs to the tetrahydrofolate dehydrogenase/cyclohydrolase family. In terms of assembly, homodimer.

The enzyme catalyses (6R)-5,10-methylene-5,6,7,8-tetrahydrofolate + NADP(+) = (6R)-5,10-methenyltetrahydrofolate + NADPH. It carries out the reaction (6R)-5,10-methenyltetrahydrofolate + H2O = (6R)-10-formyltetrahydrofolate + H(+). Its pathway is one-carbon metabolism; tetrahydrofolate interconversion. Functionally, catalyzes the oxidation of 5,10-methylenetetrahydrofolate to 5,10-methenyltetrahydrofolate and then the hydrolysis of 5,10-methenyltetrahydrofolate to 10-formyltetrahydrofolate. The sequence is that of Bifunctional protein FolD from Aromatoleum aromaticum (strain DSM 19018 / LMG 30748 / EbN1) (Azoarcus sp. (strain EbN1)).